The primary structure comprises 341 residues: Methionine import ATP-binding protein MetN 2 (341 aa).

The ABC transporter domain occupies 2-241 (IEASELTKVY…PKAPLTQEFI (240 aa)). 38 to 45 (GYSGAGKS) is a binding site for ATP.

The protein belongs to the ABC transporter superfamily. Methionine importer (TC 3.A.1.24) family. The complex is composed of two ATP-binding proteins (MetN), two transmembrane proteins (MetI) and a solute-binding protein (MetQ).

It localises to the cell membrane. It catalyses the reaction L-methionine(out) + ATP + H2O = L-methionine(in) + ADP + phosphate + H(+). It carries out the reaction D-methionine(out) + ATP + H2O = D-methionine(in) + ADP + phosphate + H(+). Part of the ABC transporter complex MetNIQ involved in methionine import. Responsible for energy coupling to the transport system. The sequence is that of Methionine import ATP-binding protein MetN 2 from Shouchella clausii (strain KSM-K16) (Alkalihalobacillus clausii).